The sequence spans 198 residues: Putative pseudouridine methyltransferase (198 aa).

S-adenosyl-L-methionine is bound by residues M132 and C186.

Belongs to the methyltransferase superfamily. TrmY family.

Its subcellular location is the cytoplasm. The sequence is that of Putative pseudouridine methyltransferase from Shewanella baltica (strain OS185).